A 670-amino-acid polypeptide reads, in one-letter code: ATP-dependent RNA helicase DDX18 (670 aa).

2 stretches are compositionally biased toward polar residues: residues 31 to 42 (SNLTLSETQNGD) and 83 to 105 (VTKS…SSNS). The tract at residues 31–169 (SNLTLSETQN…ESEVPSLPLG (139 aa)) is disordered. Residues 117-154 (MVNDAEPDTKKAKTENKGKSEEESAETTKETENNVEKP) are compositionally biased toward basic and acidic residues. Positions 179 to 207 (FASLCNLVNENTLKAIKEMGFTNMTEIQH) match the Q motif motif. A Helicase ATP-binding domain is found at 210 to 385 (IRPLLEGRDL…RISLKKEPLY (176 aa)). Residue 223–230 (AKTGSGKT) coordinates ATP. The DEAD box motif lies at 333–336 (DEAD). Residues 399–569 (GLEQGYVVCP…DIQSQLEKLI (171 aa)) enclose the Helicase C-terminal domain.

The protein belongs to the DEAD box helicase family. DDX18/HAS1 subfamily. In terms of assembly, interacts with NOL8; the interaction is RNA-dependent. Interacts with PRC2 complex components EZH2, SUZ2 and JARID2; these interactions prevent deposition of the repressive H3K27me3 mark onto rDNA in pluripotent cells.

It is found in the nucleus. The protein resides in the nucleolus. Its subcellular location is the chromosome. The catalysed reaction is ATP + H2O = ADP + phosphate + H(+). Functionally, ATP-dependent RNA helicase that plays a role in the regulation of R-loop homeostasis in both endogenous R-loop-prone regions and at sites of DNA damage. At endogenous loci such as actively transcribed genes, may act as a helicase to resolve the formation of R-loop during transcription and prevent the interference of R-loop with DNA-replication machinery. Also participates in the removal of DNA-lesion-associated R-loop. Plays an essential role for establishing pluripotency during embryogenesis and for pluripotency maintenance in embryonic stem cells. Mechanistically, prevents the polycomb repressive complex 2 (PRC2) from accessing rDNA loci and protects the active chromatin status in nucleolus. In Homo sapiens (Human), this protein is ATP-dependent RNA helicase DDX18 (DDX18).